We begin with the raw amino-acid sequence, 569 residues long: Sulfite reductase [NADPH] hemoprotein beta-component (569 aa).

[4Fe-4S] cluster-binding residues include Cys433, Cys439, Cys478, and Cys482. Cys482 contacts siroheme.

Belongs to the nitrite and sulfite reductase 4Fe-4S domain family. Alpha(8)-beta(8). The alpha component is a flavoprotein, the beta component is a hemoprotein. Siroheme is required as a cofactor. The cofactor is [4Fe-4S] cluster.

It catalyses the reaction hydrogen sulfide + 3 NADP(+) + 3 H2O = sulfite + 3 NADPH + 4 H(+). It participates in sulfur metabolism; hydrogen sulfide biosynthesis; hydrogen sulfide from sulfite (NADPH route): step 1/1. Functionally, component of the sulfite reductase complex that catalyzes the 6-electron reduction of sulfite to sulfide. This is one of several activities required for the biosynthesis of L-cysteine from sulfate. The polypeptide is Sulfite reductase [NADPH] hemoprotein beta-component (Buchnera aphidicola subsp. Acyrthosiphon pisum (strain 5A)).